The chain runs to 310 residues: Glutaminase 1 (310 aa).

Substrate-binding residues include Ser66, Asn117, Glu161, Asn168, Tyr192, Tyr244, and Val262. Lys294 carries the N6-acetyllysine modification.

This sequence belongs to the glutaminase family. As to quaternary structure, homotetramer.

The catalysed reaction is L-glutamine + H2O = L-glutamate + NH4(+). This is Glutaminase 1 from Escherichia coli (strain K12).